The chain runs to 231 residues: Proteasome subunit alpha type-2 (231 aa).

The protein belongs to the peptidase T1A family. As to quaternary structure, the 26S proteasome consists of a 20S proteasome core and two 19S regulatory subunits. The 20S proteasome core is composed of 28 subunits that are arranged in four stacked rings, resulting in a barrel-shaped structure. The two end rings are each formed by seven alpha subunits, and the two central rings are each formed by seven beta subunits. The catalytic chamber with the active sites is on the inside of the barrel.

The protein resides in the cytoplasm. It localises to the nucleus. Its function is as follows. The proteasome is a multicatalytic proteinase complex which is characterized by its ability to cleave peptides with Arg, Phe, Tyr, Leu, and Glu adjacent to the leaving group at neutral or slightly basic pH. The proteasome has an ATP-dependent proteolytic activity. The sequence is that of Proteasome subunit alpha type-2 (pas-2) from Caenorhabditis elegans.